A 121-amino-acid polypeptide reads, in one-letter code: UPF0738 protein BPUM_1088 (121 aa).

The protein belongs to the UPF0738 family.

The sequence is that of UPF0738 protein BPUM_1088 from Bacillus pumilus (strain SAFR-032).